We begin with the raw amino-acid sequence, 335 residues long: Glyceraldehyde-3-phosphate dehydrogenase (335 aa).

NAD(+)-binding positions include 12-13 (RI), Asp36, Arg80, and Ser122. D-glyceraldehyde 3-phosphate is bound by residues 152-154 (SCT), Thr183, Arg198, 211-212 (TG), and Arg234. The active-site Nucleophile is Cys153. Asn316 is an NAD(+) binding site.

This sequence belongs to the glyceraldehyde-3-phosphate dehydrogenase family. As to quaternary structure, homotetramer.

The protein localises to the cytoplasm. The enzyme catalyses D-glyceraldehyde 3-phosphate + phosphate + NAD(+) = (2R)-3-phospho-glyceroyl phosphate + NADH + H(+). Its pathway is carbohydrate degradation; glycolysis; pyruvate from D-glyceraldehyde 3-phosphate: step 1/5. Functionally, catalyzes the oxidative phosphorylation of glyceraldehyde 3-phosphate (G3P) to 1,3-bisphosphoglycerate (BPG) using the cofactor NAD. The first reaction step involves the formation of a hemiacetal intermediate between G3P and a cysteine residue, and this hemiacetal intermediate is then oxidized to a thioester, with concomitant reduction of NAD to NADH. The reduced NADH is then exchanged with the second NAD, and the thioester is attacked by a nucleophilic inorganic phosphate to produce BPG. This Xanthobacter flavus protein is Glyceraldehyde-3-phosphate dehydrogenase (gap).